A 160-amino-acid polypeptide reads, in one-letter code: SsrA-binding protein (160 aa).

The interval 1–23 (MARKKKQDKGQGPKTIAQNRRAR) is disordered.

The protein belongs to the SmpB family.

The protein localises to the cytoplasm. Functionally, required for rescue of stalled ribosomes mediated by trans-translation. Binds to transfer-messenger RNA (tmRNA), required for stable association of tmRNA with ribosomes. tmRNA and SmpB together mimic tRNA shape, replacing the anticodon stem-loop with SmpB. tmRNA is encoded by the ssrA gene; the 2 termini fold to resemble tRNA(Ala) and it encodes a 'tag peptide', a short internal open reading frame. During trans-translation Ala-aminoacylated tmRNA acts like a tRNA, entering the A-site of stalled ribosomes, displacing the stalled mRNA. The ribosome then switches to translate the ORF on the tmRNA; the nascent peptide is terminated with the 'tag peptide' encoded by the tmRNA and targeted for degradation. The ribosome is freed to recommence translation, which seems to be the essential function of trans-translation. The protein is SsrA-binding protein of Thermobifida fusca (strain YX).